A 440-amino-acid chain; its full sequence is Probable carboxypeptidase AFUB_072730 (440 aa).

A signal peptide spans 1-16 (MKPLTSLLLSAALSAA). N-linked (GlcNAc...) asparagine glycans are attached at residues Asn-87 and Asn-149. Asp-165 is a Zn(2+) binding site. The active-site Proton acceptor is Glu-197. Glu-198 is a Zn(2+) binding site. Residues Asn-353 and Asn-372 are each glycosylated (N-linked (GlcNAc...) asparagine).

It belongs to the peptidase M20A family. The cofactor is Zn(2+).

It is found in the secreted. This chain is Probable carboxypeptidase AFUB_072730, found in Aspergillus fumigatus (strain CBS 144.89 / FGSC A1163 / CEA10) (Neosartorya fumigata).